A 1440-amino-acid polypeptide reads, in one-letter code: Gag-Pro-Pol polyprotein (1440 aa).

Gly2 is lipidated: N-myristoyl glycine; by host. The tract at residues 95–116 is disordered; that stretch reads EAPPSAPLAEDPQKPPPYPEQA. A PTAP/PSAP motif motif is present at residues 98–101; the sequence is PSAP. A PPXY motif motif is present at residues 109–112; it reads PPPY. 2 consecutive CCHC-type zinc fingers follow at residues 349 to 366 and 372 to 389; these read QPCFRCGQVGHWSRDCKQ and GPCPVCQDPTHWKRDCPQ. The Peptidase A2 domain maps to 457–535; sequence VQALLDTGAD…NQWTILGRDA (79 aa). The For protease activity; shared with dimeric partner role is filled by Asp462. The Reverse transcriptase domain occupies 593 to 783; sequence LEAKHIEPYQ…GPIHFLGQVI (191 aa). Residues Asp659, Asp734, Asp735, Asp1019, Glu1052, Asp1074, Asp1135, Asp1208, and Asp1265 each coordinate Mg(2+). An RNase H type-1 domain is found at 1010–1143; the sequence is INHAPCLFSD…TDALMLAPLL (134 aa). An Integrase catalytic domain is found at 1197 to 1366; it reads RGHAPNDIWQ…PPVPEDTLPP (170 aa). Residues 1371 to 1420 constitute a DNA-binding region (integrase-type); it reads KWYYYKIPGLTNSRWSGPVQSLKEAAGAALIPVGGSYLWIPWRLLKRGIC.

As to quaternary structure, interacts with human TSG101. This interaction is essential for budding and release of viral particles. The cofactor is Mg(2+). In terms of processing, specific enzymatic cleavages by the viral protease yield mature proteins. The polyprotein is cleaved during and after budding, this process is termed maturation. The protease is autoproteolytically processed at its N- and C-termini.

It is found in the virion. The catalysed reaction is Endonucleolytic cleavage to 5'-phosphomonoester.. The enzyme catalyses DNA(n) + a 2'-deoxyribonucleoside 5'-triphosphate = DNA(n+1) + diphosphate. Functionally, matrix protein p19 targets Gag, Gag-Pro and Gag-Pro-Pol polyproteins to the plasma membrane via a multipartite membrane binding signal, that includes its myristoylated N-terminus. Also mediates nuclear localization of the preintegration complex. Its function is as follows. Capsid protein p24 forms the conical core of the virus that encapsulates the genomic RNA-nucleocapsid complex. In terms of biological role, nucleocapsid protein p15 is involved in the packaging and encapsidation of two copies of the genome. The aspartyl protease mediates proteolytic cleavages of Gag, Gag-Pro and Gag-Pro-Pol polyproteins during or shortly after the release of the virion from the plasma membrane. Cleavages take place as an ordered, step-wise cascade to yield mature proteins. This process is called maturation. Displays maximal activity during the budding process just prior to particle release from the cell. Hydrolyzes host EIF4GI in order to shut off the capped cellular mRNA translation. The resulting inhibition of cellular protein synthesis serves to ensure maximal viral gene expression and to evade host immune response. Functionally, reverse transcriptase (RT) is a multifunctional enzyme that converts the viral RNA genome into dsDNA in the cytoplasm, shortly after virus entry into the cell. This enzyme displays a DNA polymerase activity that can copy either DNA or RNA templates, and a ribonuclease H (RNase H) activity that cleaves the RNA strand of RNA-DNA heteroduplexes in a partially processive 3' to 5'-endonucleasic mode. Conversion of viral genomic RNA into dsDNA requires many steps. A tRNA-Pro binds to the primer-binding site (PBS) situated at the 5'-end of the viral RNA. RT uses the 3' end of the tRNA primer to perform a short round of RNA-dependent minus-strand DNA synthesis. The reading proceeds through the U5 region and ends after the repeated (R) region which is present at both ends of viral RNA. The portion of the RNA-DNA heteroduplex is digested by the RNase H, resulting in a ssDNA product attached to the tRNA primer. This ssDNA/tRNA hybridizes with the identical R region situated at the 3' end of viral RNA. This template exchange, known as minus-strand DNA strong stop transfer, can be either intra- or intermolecular. RT uses the 3' end of this newly synthesized short ssDNA to perform the RNA-dependent minus-strand DNA synthesis of the whole template. RNase H digests the RNA template except for a polypurine tract (PPT) situated at the 5' end of the genome. It is not clear if both polymerase and RNase H activities are simultaneous. RNase H probably can proceed both in a polymerase-dependent (RNA cut into small fragments by the same RT performing DNA synthesis) and a polymerase-independent mode (cleavage of remaining RNA fragments by free RTs). Secondly, RT performs DNA-directed plus-strand DNA synthesis using the PPT that has not been removed by RNase H as primer. PPT and tRNA primers are then removed by RNase H. The 3' and 5' ssDNA PBS regions hybridize to form a circular dsDNA intermediate. Strand displacement synthesis by RT to the PBS and PPT ends produces a blunt ended, linear dsDNA copy of the viral genome that includes long terminal repeats (LTRs) at both ends. Its function is as follows. Integrase catalyzes viral DNA integration into the host chromosome, by performing a series of DNA cutting and joining reactions. This enzyme activity takes place after virion entry into a cell and reverse transcription of the RNA genome in dsDNA. The first step in the integration process is 3' processing. This step requires a complex comprising the viral genome, matrix protein, and integrase. This complex is called the pre-integration complex (PIC). The integrase protein removes 2 nucleotides from each 3' end of the viral DNA, leaving recessed dinucleotides OH's at the 3' ends. In the second step, the PIC access cell chromosomes during cell division. The third step, termed strand transfer, the integrase protein joins the previously processed 3' ends to the 5'-ends of strands of target cellular DNA at the site of integration. The 5'-ends are produced by integrase-catalyzed staggered cuts, 5 bp apart. A Y-shaped, gapped, recombination intermediate results, with the 5'-ends of the viral DNA strands and the 3' ends of target DNA strands remaining unjoined, flanking a gap of 5 bp. The last step is viral DNA integration into host chromosome. This involves host DNA repair synthesis in which the 5 bp gaps between the unjoined strands (see above) are filled in and then ligated. The chain is Gag-Pro-Pol polyprotein (gag-pro-pol) from Human T-cell leukemia virus 3 (strain 2026ND) (HTLV-3).